A 512-amino-acid chain; its full sequence is ATP synthase subunit alpha 2 (512 aa).

169–176 (GDRQTGKT) contacts ATP.

Belongs to the ATPase alpha/beta chains family. In terms of assembly, F-type ATPases have 2 components, CF(1) - the catalytic core - and CF(0) - the membrane proton channel. CF(1) has five subunits: alpha(3), beta(3), gamma(1), delta(1), epsilon(1). CF(0) has four main subunits: a(1), b(1), b'(1) and c(9-12).

It is found in the cell inner membrane. It catalyses the reaction ATP + H2O + 4 H(+)(in) = ADP + phosphate + 5 H(+)(out). In terms of biological role, produces ATP from ADP in the presence of a proton gradient across the membrane. The alpha chain is a regulatory subunit. This is ATP synthase subunit alpha 2 from Dinoroseobacter shibae (strain DSM 16493 / NCIMB 14021 / DFL 12).